Consider the following 333-residue polypeptide: Ketol-acid reductoisomerase (NADP(+)) (333 aa).

Positions alanine 2–threonine 182 constitute a KARI N-terminal Rossmann domain. NADP(+) is bound by residues phenylalanine 25–glutamine 28, serine 51, serine 53, and aspartate 83–glutamine 86. The active site involves histidine 108. Residue glycine 134 participates in NADP(+) binding. Residues threonine 183 to isoleucine 328 enclose the KARI C-terminal knotted domain. The Mg(2+) site is built by aspartate 191, glutamate 195, glutamate 227, and glutamate 231. Serine 252 contributes to the substrate binding site.

This sequence belongs to the ketol-acid reductoisomerase family. It depends on Mg(2+) as a cofactor.

It carries out the reaction (2R)-2,3-dihydroxy-3-methylbutanoate + NADP(+) = (2S)-2-acetolactate + NADPH + H(+). The catalysed reaction is (2R,3R)-2,3-dihydroxy-3-methylpentanoate + NADP(+) = (S)-2-ethyl-2-hydroxy-3-oxobutanoate + NADPH + H(+). It functions in the pathway amino-acid biosynthesis; L-isoleucine biosynthesis; L-isoleucine from 2-oxobutanoate: step 2/4. Its pathway is amino-acid biosynthesis; L-valine biosynthesis; L-valine from pyruvate: step 2/4. Functionally, involved in the biosynthesis of branched-chain amino acids (BCAA). Catalyzes an alkyl-migration followed by a ketol-acid reduction of (S)-2-acetolactate (S2AL) to yield (R)-2,3-dihydroxy-isovalerate. In the isomerase reaction, S2AL is rearranged via a Mg-dependent methyl migration to produce 3-hydroxy-3-methyl-2-ketobutyrate (HMKB). In the reductase reaction, this 2-ketoacid undergoes a metal-dependent reduction by NADPH to yield (R)-2,3-dihydroxy-isovalerate. The sequence is that of Ketol-acid reductoisomerase (NADP(+)) from Caldicellulosiruptor bescii (strain ATCC BAA-1888 / DSM 6725 / KCTC 15123 / Z-1320) (Anaerocellum thermophilum).